A 474-amino-acid chain; its full sequence is Aspartyl/glutamyl-tRNA(Asn/Gln) amidotransferase subunit B (474 aa).

The protein belongs to the GatB/GatE family. GatB subfamily. In terms of assembly, heterotrimer of A, B and C subunits.

The enzyme catalyses L-glutamyl-tRNA(Gln) + L-glutamine + ATP + H2O = L-glutaminyl-tRNA(Gln) + L-glutamate + ADP + phosphate + H(+). The catalysed reaction is L-aspartyl-tRNA(Asn) + L-glutamine + ATP + H2O = L-asparaginyl-tRNA(Asn) + L-glutamate + ADP + phosphate + 2 H(+). Functionally, allows the formation of correctly charged Asn-tRNA(Asn) or Gln-tRNA(Gln) through the transamidation of misacylated Asp-tRNA(Asn) or Glu-tRNA(Gln) in organisms which lack either or both of asparaginyl-tRNA or glutaminyl-tRNA synthetases. The reaction takes place in the presence of glutamine and ATP through an activated phospho-Asp-tRNA(Asn) or phospho-Glu-tRNA(Gln). The chain is Aspartyl/glutamyl-tRNA(Asn/Gln) amidotransferase subunit B from Persephonella marina (strain DSM 14350 / EX-H1).